A 273-amino-acid chain; its full sequence is Elongator complex protein 6 (273 aa).

Belongs to the ELP6 family. Component of the elongator complex which consists of ELP1/IKI3, ELP2, ELP3, ELP4, ELP5/IKI1 and ELP6. The elongator complex is composed of two copies of the Elp123 subcomplex (composed of ELP1/IKI3, ELP2 and ELP3) and two copies of the Elp456 subcomplex (composed of ELP4, ELP5/IKI1 and ELP6). The Elp123 subcomplex forms a two-lobed scaffold, which binds the Elp456 subcomplex asymmetrically. In each lobe, ELP2 is tightly sandwiched between ELP1/IKI3 and ELP3. The Elp123 subcomplex binds tRNA through ELP1/IKI3 and ELP3 and can bind 2 tRNAs simultaneously. tRNA-binding by the Elp123 subcomplex induces conformational rearrangements which precisely position the targeted anticodon base in the active site. The Elp456 subcomplex binds tRNA and has ATPase activity.

The protein localises to the cytoplasm. It localises to the nucleus. It functions in the pathway tRNA modification; 5-methoxycarbonylmethyl-2-thiouridine-tRNA biosynthesis. In terms of biological role, component of the elongator complex which is required for multiple tRNA modifications, including mcm5U (5-methoxycarbonylmethyl uridine), mcm5s2U (5-methoxycarbonylmethyl-2-thiouridine), and ncm5U (5-carbamoylmethyl uridine). The elongator complex catalyzes formation of carboxymethyluridine in the wobble base at position 34 in tRNAs. It functions as a gamma-toxin target (TOT); disruption of the complex confers resistance to Kluyveromyces lactis toxin zymocin (pGKL1 killer toxin). May also be involved in sensitivity to Pichia inositovora toxin. The sequence is that of Elongator complex protein 6 (ELP6) from Saccharomyces cerevisiae (strain ATCC 204508 / S288c) (Baker's yeast).